We begin with the raw amino-acid sequence, 135 residues long: VHFSSSVMVLLFGLPFLVTLVCYGLMALRLCRPLPGAGQSSSRLRSLRTIAVVMTVFAVCLVPFHITRTIYYLARLLKADCQILNIVNVVYKVTRPLASANSCLDPLLYLFTGDKYRHQLQRLCRVSAPQRRITA.

A helical membrane pass occupies residues 1–25; sequence VHFSSSVMVLLFGLPFLVTLVCYGL. Topologically, residues 26–49 are cytoplasmic; sequence MALRLCRPLPGAGQSSSRLRSLRT. The chain crosses the membrane as a helical span at residues 50–72; the sequence is IAVVMTVFAVCLVPFHITRTIYY. Residues 73 to 90 lie on the Extracellular side of the membrane; it reads LARLLKADCQILNIVNVV. The chain crosses the membrane as a helical span at residues 91–112; the sequence is YKVTRPLASANSCLDPLLYLFT. At 113 to 135 the chain is on the cytoplasmic side; it reads GDKYRHQLQRLCRVSAPQRRITA.

It belongs to the G-protein coupled receptor 1 family. As to expression, expressed in brain, heart, stria vascularis and vestibular labyrinth.

Its subcellular location is the cell membrane. Receptor for ATP and UTP coupled to G-proteins that activate a phosphatidylinositol-calcium second messenger system. Not activated by UDP. The polypeptide is P2Y purinoceptor 4 (P2RY4) (Meriones unguiculatus (Mongolian jird)).